A 396-amino-acid chain; its full sequence is Ribosomal RNA large subunit methyltransferase I (396 aa).

The 80-residue stretch at 2 to 81 folds into the PUA domain; it reads TVSIYLAKGR…EAIDKDFFVR (80 aa).

This sequence belongs to the methyltransferase superfamily. RlmI family.

It localises to the cytoplasm. It catalyses the reaction cytidine(1962) in 23S rRNA + S-adenosyl-L-methionine = 5-methylcytidine(1962) in 23S rRNA + S-adenosyl-L-homocysteine + H(+). Specifically methylates the cytosine at position 1962 (m5C1962) of 23S rRNA. This is Ribosomal RNA large subunit methyltransferase I from Aliivibrio fischeri (strain MJ11) (Vibrio fischeri).